A 520-amino-acid polypeptide reads, in one-letter code: 2,3-bisphosphoglycerate-independent phosphoglycerate mutase (520 aa).

Mn(2+) contacts are provided by aspartate 13 and serine 63. Residue serine 63 is the Phosphoserine intermediate of the active site. Residues histidine 124, 154–155 (RD), arginine 192, arginine 198, 268–271 (RADR), and lysine 342 each bind substrate. Positions 409, 413, 450, 451, and 469 each coordinate Mn(2+).

It belongs to the BPG-independent phosphoglycerate mutase family. As to quaternary structure, monomer. Mn(2+) is required as a cofactor.

It carries out the reaction (2R)-2-phosphoglycerate = (2R)-3-phosphoglycerate. It participates in carbohydrate degradation; glycolysis; pyruvate from D-glyceraldehyde 3-phosphate: step 3/5. Its function is as follows. Catalyzes the interconversion of 2-phosphoglycerate and 3-phosphoglycerate. This chain is 2,3-bisphosphoglycerate-independent phosphoglycerate mutase, found in Colwellia psychrerythraea (strain 34H / ATCC BAA-681) (Vibrio psychroerythus).